A 151-amino-acid chain; its full sequence is Deoxyuridine 5'-triphosphate nucleotidohydrolase (151 aa).

Residues 70-72 (RSG), Asn83, 87-89 (LID), and Met97 each bind substrate.

It belongs to the dUTPase family. Requires Mg(2+) as cofactor.

The enzyme catalyses dUTP + H2O = dUMP + diphosphate + H(+). It functions in the pathway pyrimidine metabolism; dUMP biosynthesis; dUMP from dCTP (dUTP route): step 2/2. Functionally, this enzyme is involved in nucleotide metabolism: it produces dUMP, the immediate precursor of thymidine nucleotides and it decreases the intracellular concentration of dUTP so that uracil cannot be incorporated into DNA. This Haemophilus influenzae (strain 86-028NP) protein is Deoxyuridine 5'-triphosphate nucleotidohydrolase.